Reading from the N-terminus, the 293-residue chain is Undecaprenyl-diphosphatase (293 aa).

6 helical membrane passes run Val74–Phe94, Trp107–Ile127, Met134–Met154, Phe209–Ala229, Val243–Val263, and Phe271–Leu291.

The protein belongs to the UppP family.

The protein resides in the cell membrane. The enzyme catalyses di-trans,octa-cis-undecaprenyl diphosphate + H2O = di-trans,octa-cis-undecaprenyl phosphate + phosphate + H(+). Its function is as follows. Catalyzes the dephosphorylation of undecaprenyl diphosphate (UPP). Confers resistance to bacitracin. This Corynebacterium glutamicum (strain R) protein is Undecaprenyl-diphosphatase.